The chain runs to 150 residues: Pyruvoyl-dependent arginine decarboxylase (150 aa).

Residue Ser-42 is modified to Pyruvic acid (Ser).

The protein belongs to the PdaD family. Requires pyruvate as cofactor.

The enzyme catalyses L-arginine + H(+) = agmatine + CO2. The sequence is that of Pyruvoyl-dependent arginine decarboxylase from Methanopyrus kandleri (strain AV19 / DSM 6324 / JCM 9639 / NBRC 100938).